We begin with the raw amino-acid sequence, 238 residues long: uncharacterized protein (238 aa).

Helical transmembrane passes span 16-36, 44-64, 81-101, and 123-143; these read HLII…IGLE, VGVK…IVSI, PMRL…GVIL, and IGIA…VMIL.

The protein belongs to the MgtC/SapB family.

It is found in the cell inner membrane. This is an uncharacterized protein from Haemophilus influenzae (strain ATCC 51907 / DSM 11121 / KW20 / Rd).